The primary structure comprises 600 residues: Single-strand DNA endonuclease 1 (600 aa).

Residues 1–97 are N-domain; the sequence is MGVKYLWDVL…KRRLKARFEI (97 aa). Residues 2-97 form an XPG-N domain region; sequence GVKYLWDVLE…KRRLKARFEI (96 aa). Residues Asp30, Asp76, Glu142, Glu144, Asp163, Asp165, and Asp215 each coordinate Mg(2+). The interval 130–215 is XPG-I domain; it reads STLGILCLDG…IALALLLGSD (86 aa). 2 I-domain regions span residues 130 to 218 and 130 to 219; these read STLG…DYSQ and STLG…YSQG. The tract at residues 215–353 is 5'-3' exonuclease domain; it reads DYSQGVRGLR…ILPKVAERNL (139 aa). The disordered stretch occupies residues 433–458; it reads MAAKKKKPKPKQKQKETSSPTKSSSL. Residues 435–444 are compositionally biased toward basic residues; it reads AKKKKPKPKQ.

Belongs to the XPG/RAD2 endonuclease family. GEN subfamily. It depends on Mg(2+) as a cofactor.

It localises to the nucleus. Its function is as follows. Endonuclease which cleaves flap structures at the junction between single-stranded DNA and double-stranded DNA with a specific cleavage site in the 5' overhang strand exactly one nucleotide 3' of the branch point. Structure- and sequence-specific nuclease that resolves holliday junctions (HJs) by symmetrically oriented incisions in two opposing strands near the junction point, thus leading to ligatable products; HJs are physical links between homologous DNA molecules that arise as central intermediary structures during homologous recombination and repair in meiotic and somatic cells. Structure-specific nuclease with 5'-flap endonuclease activity, preferentially cleaving static flaps 5' overhang strand exactly one nucleotide in the 3' direction of the branch point and, to lower extent, on the two neighboring positions. Also able to cleave double-stranded flap strand 1 one nucleotide in the 3' direction of the branch point. Together with MUS81, essential for the resolution of toxic replication structures to ensure genome stability, and to maintain telomere integrity and replication. The sequence is that of Single-strand DNA endonuclease 1 from Arabidopsis thaliana (Mouse-ear cress).